We begin with the raw amino-acid sequence, 398 residues long: Nicotinate phosphoribosyltransferase (398 aa).

The residue at position 222 (histidine 222) is a Phosphohistidine; by autocatalysis.

Belongs to the NAPRTase family. Post-translationally, transiently phosphorylated on a His residue during the reaction cycle. Phosphorylation strongly increases the affinity for substrates and increases the rate of nicotinate D-ribonucleotide production. Dephosphorylation regenerates the low-affinity form of the enzyme, leading to product release.

The enzyme catalyses nicotinate + 5-phospho-alpha-D-ribose 1-diphosphate + ATP + H2O = nicotinate beta-D-ribonucleotide + ADP + phosphate + diphosphate. Its pathway is cofactor biosynthesis; NAD(+) biosynthesis; nicotinate D-ribonucleotide from nicotinate: step 1/1. Functionally, catalyzes the synthesis of beta-nicotinate D-ribonucleotide from nicotinate and 5-phospho-D-ribose 1-phosphate at the expense of ATP. The protein is Nicotinate phosphoribosyltransferase of Acidovorax ebreus (strain TPSY) (Diaphorobacter sp. (strain TPSY)).